Here is a 466-residue protein sequence, read N- to C-terminus: Ribulose bisphosphate carboxylase large chain (466 aa).

The residue at position 5 (Lys-5) is an N6,N6,N6-trimethyllysine. Asn-114 and Thr-164 together coordinate substrate. The Proton acceptor role is filled by Lys-166. Residue Lys-168 participates in substrate binding. Mg(2+)-binding residues include Lys-192, Asp-194, and Glu-195. Lys-192 carries the post-translational modification N6-carboxylysine. His-285 acts as the Proton acceptor in catalysis. Residues Arg-286, His-318, and Ser-370 each coordinate substrate.

Belongs to the RuBisCO large chain family. Type I subfamily. As to quaternary structure, heterohexadecamer of 8 large chains and 8 small chains; disulfide-linked. The disulfide link is formed within the large subunit homodimers. The cofactor is Mg(2+). Post-translationally, the disulfide bond which can form in the large chain dimeric partners within the hexadecamer appears to be associated with oxidative stress and protein turnover.

The protein localises to the plastid. It localises to the chloroplast. It carries out the reaction 2 (2R)-3-phosphoglycerate + 2 H(+) = D-ribulose 1,5-bisphosphate + CO2 + H2O. It catalyses the reaction D-ribulose 1,5-bisphosphate + O2 = 2-phosphoglycolate + (2R)-3-phosphoglycerate + 2 H(+). Functionally, ruBisCO catalyzes two reactions: the carboxylation of D-ribulose 1,5-bisphosphate, the primary event in carbon dioxide fixation, as well as the oxidative fragmentation of the pentose substrate in the photorespiration process. Both reactions occur simultaneously and in competition at the same active site. This chain is Ribulose bisphosphate carboxylase large chain, found in Isophysis tasmanica.